Here is a 31-residue protein sequence, read N- to C-terminus: Photosystem I reaction center subunit XII (31 aa).

A helical membrane pass occupies residues 7–26 (QIYIALLTALIPAFFALKLG).

The protein belongs to the PsaM family.

The protein resides in the plastid. The protein localises to the chloroplast thylakoid membrane. The protein is Photosystem I reaction center subunit XII of Euglena mutabilis.